The chain runs to 809 residues: Endoplasmin homolog (809 aa).

The first 18 residues, 1 to 18, serve as a signal peptide directing secretion; that stretch reads MRKWALSCALLLVLLLTT. ATP contacts are provided by Asn111, Asp155, Asn168, and Phe200. A glycan (N-linked (GlcNAc...) asparagine) is linked at Asn111. Residues 293–320 show a composition bias toward acidic residues; the sequence is VPADEEESNEEEESTTETTEEEETEDDE. The disordered stretch occupies residues 293–329; the sequence is VPADEEESNEEEESTTETTEEEETEDDEEKKPKTKTV. N-linked (GlcNAc...) asparagine glycans are attached at residues Asn410, Asn450, and Asn617. Residues 766–809 are disordered; the sequence is SLDLSPDAAVEEEEEVEEPEVEEKESAKQEAEEPEHEQYDKDEL. Residues 774-788 show a composition bias toward acidic residues; the sequence is AVEEEEEVEEPEVEE. A compositionally biased stretch (basic and acidic residues) spans 789 to 809; that stretch reads KESAKQEAEEPEHEQYDKDEL. The Prevents secretion from ER signature appears at 806–809; it reads KDEL.

It belongs to the heat shock protein 90 family.

The protein localises to the endoplasmic reticulum lumen. Its function is as follows. May have a molecular chaperone role in the processing of secreted materials. This chain is Endoplasmin homolog, found in Hordeum vulgare (Barley).